A 398-amino-acid chain; its full sequence is Acetate kinase (398 aa).

Asparagine 7 is a Mg(2+) binding site. Lysine 14 serves as a coordination point for ATP. Arginine 91 contributes to the substrate binding site. Aspartate 148 (proton donor/acceptor) is an active-site residue. ATP is bound by residues 208-212 (HLGNG), 283-285 (DSR), and 331-335 (GIGEN). Residue glutamate 384 participates in Mg(2+) binding.

It belongs to the acetokinase family. In terms of assembly, homodimer. Requires Mg(2+) as cofactor. It depends on Mn(2+) as a cofactor.

The protein resides in the cytoplasm. It catalyses the reaction acetate + ATP = acetyl phosphate + ADP. The protein operates within metabolic intermediate biosynthesis; acetyl-CoA biosynthesis; acetyl-CoA from acetate: step 1/2. In terms of biological role, catalyzes the formation of acetyl phosphate from acetate and ATP. Can also catalyze the reverse reaction. This Halothermothrix orenii (strain H 168 / OCM 544 / DSM 9562) protein is Acetate kinase.